Here is a 346-residue protein sequence, read N- to C-terminus: Peripherin-2 (346 aa).

Residues 1–24 (MALLKVKFDQKKRVKLAQGLWLMN) are Cytoplasmic-facing. Residues 25–43 (WLSVLAGIVIFSLGLFLKI) traverse the membrane as a helical segment. At 44 to 61 (ELRKRSDVMNNSESHFVP) the chain is on the lumenal side. N-linked (GlcNAc...) asparagine glycosylation is present at Asn-53. Residues 62–80 (NSLIGMGVLSCVFNSLAGK) form a helical membrane-spanning segment. The Cytoplasmic portion of the chain corresponds to 81–99 (ICYDALDPSKYAKWKPWLK). The chain crosses the membrane as a helical span at residues 100 to 123 (SYLVVCVLFNIVLFLVALCCFLMR). Residues 124-264 (GSLESTLAQG…LSYYGSLMNS (141 aa)) are Lumenal-facing. Asn-229 carries an N-linked (GlcNAc...) asparagine glycan. The helical transmembrane segment at 265-290 (MGAVTLLVWLFEVSITIGLRYLHTAL) threads the bilayer. At 291–346 (EGVSNPEDLECESEGWLLEKSVSETWKAFLESLKKLGKSNQVEAEGADAGQAPEAG) the chain is on the cytoplasmic side. The interaction with MREG stretch occupies residues 341–346 (QAPEAG).

It belongs to the PRPH2/ROM1 family. Homodimer; disulfide-linked. Forms a homotetramer. Forms a heterotetramer with ROM1. Homotetramer and heterotetramer core complexes go on to form higher order complexes by formation of intermolecular disulfide bonds. Interacts with MREG. Interacts with STX3. Interacts with SNAP25. In terms of tissue distribution, retina (photoreceptor). In rim region of ROS (rod outer segment) disks.

It localises to the membrane. The protein resides in the cell projection. The protein localises to the cilium. It is found in the photoreceptor outer segment. Its subcellular location is the photoreceptor inner segment. In terms of biological role, essential for retina photoreceptor outer segment disk morphogenesis, may also play a role with ROM1 in the maintenance of outer segment disk structure. Required for the maintenance of retinal outer nuclear layer thickness. Required for the correct development and organization of the photoreceptor inner segment. This Felis catus (Cat) protein is Peripherin-2 (PRPH2).